A 304-amino-acid chain; its full sequence is Probable 5-dehydro-4-deoxyglucarate dehydratase (304 aa).

Belongs to the DapA family.

It catalyses the reaction 5-dehydro-4-deoxy-D-glucarate + H(+) = 2,5-dioxopentanoate + CO2 + H2O. The protein operates within carbohydrate acid metabolism; D-glucarate degradation; 2,5-dioxopentanoate from D-glucarate: step 2/2. The polypeptide is Probable 5-dehydro-4-deoxyglucarate dehydratase (Rhodococcus opacus (strain B4)).